Here is a 208-residue protein sequence, read N- to C-terminus: Ribosomal RNA small subunit methyltransferase G (208 aa).

S-adenosyl-L-methionine-binding positions include Gly78, Phe83, 101-103, 129-130, and Arg142; these read ERS and IE.

It belongs to the methyltransferase superfamily. RNA methyltransferase RsmG family.

Its subcellular location is the cytoplasm. Specifically methylates the N7 position of a guanine in 16S rRNA. This is Ribosomal RNA small subunit methyltransferase G from Borreliella burgdorferi (strain ZS7) (Borrelia burgdorferi).